Here is a 173-residue protein sequence, read N- to C-terminus: Photosystem I assembly protein Ycf3 (173 aa).

TPR repeat units follow at residues 35–68, 72–105, and 120–153; these read AFSY…EEDP, SYIL…NFKL, and GVQA…APDN.

It belongs to the Ycf3 family.

The protein resides in the plastid. It is found in the chloroplast thylakoid membrane. Its function is as follows. Essential for the assembly of the photosystem I (PSI) complex. May act as a chaperone-like factor to guide the assembly of the PSI subunits. The polypeptide is Photosystem I assembly protein Ycf3 (Porphyra purpurea (Red seaweed)).